The sequence spans 455 residues: 1-deoxy-D-xylulose 5-phosphate reductoisomerase (455 aa).

Residues T30, G31, S32, I33, Q63, and N159 each contribute to the NADPH site. K160 provides a ligand contact to 1-deoxy-D-xylulose 5-phosphate. Residue E161 participates in NADPH binding. D185 serves as a coordination point for Mn(2+). 1-deoxy-D-xylulose 5-phosphate contacts are provided by S186 and E187. E187 is a binding site for Mn(2+). Residues 205 to 214 (YATAKQSIQP) are compositionally biased toward polar residues. Positions 205 to 233 (YATAKQSIQPESVRATDPPSSTTDSPAKT) are disordered. 2 residues coordinate 1-deoxy-D-xylulose 5-phosphate: S246 and H269. Position 275 (G275) interacts with NADPH. 1-deoxy-D-xylulose 5-phosphate contacts are provided by S282, N287, K288, and E291. Residue E291 coordinates Mn(2+).

Belongs to the DXR family. The cofactor is Mg(2+). Requires Mn(2+) as cofactor.

It catalyses the reaction 2-C-methyl-D-erythritol 4-phosphate + NADP(+) = 1-deoxy-D-xylulose 5-phosphate + NADPH + H(+). The protein operates within isoprenoid biosynthesis; isopentenyl diphosphate biosynthesis via DXP pathway; isopentenyl diphosphate from 1-deoxy-D-xylulose 5-phosphate: step 1/6. Its function is as follows. Catalyzes the NADPH-dependent rearrangement and reduction of 1-deoxy-D-xylulose-5-phosphate (DXP) to 2-C-methyl-D-erythritol 4-phosphate (MEP). This Rhodopirellula baltica (strain DSM 10527 / NCIMB 13988 / SH1) protein is 1-deoxy-D-xylulose 5-phosphate reductoisomerase.